The sequence spans 142 residues: SLSDKDKAVVKALWAKIGSRADEIGAEALGRMLTVYPQTKTYFSHWSDLSPGSGPVKKHGKTIMGAVGDAVSKIDDLVGALSALSELHAFKLRIDPANFKILAHNVIVVIGMLFPGDFTPEVHMSVDKFFQNLALALSEKYR.

An N-acetylserine modification is found at Ser1. One can recognise a Globin domain in the interval Ser1–Arg142. His59 is an O2 binding site. His88 serves as a coordination point for heme b.

Belongs to the globin family. As to quaternary structure, heterotetramer of two alpha chains and two beta chains. Red blood cells.

Involved in oxygen transport from gills to the various peripheral tissues. In Carassius auratus (Goldfish), this protein is Hemoglobin subunit alpha (hba).